The sequence spans 209 residues: ATP-dependent Clp protease proteolytic subunit (209 aa).

Ser107 acts as the Nucleophile in catalysis. The active site involves His132.

It belongs to the peptidase S14 family. In terms of assembly, fourteen ClpP subunits assemble into 2 heptameric rings which stack back to back to give a disk-like structure with a central cavity, resembling the structure of eukaryotic proteasomes.

The protein resides in the cytoplasm. It carries out the reaction Hydrolysis of proteins to small peptides in the presence of ATP and magnesium. alpha-casein is the usual test substrate. In the absence of ATP, only oligopeptides shorter than five residues are hydrolyzed (such as succinyl-Leu-Tyr-|-NHMec, and Leu-Tyr-Leu-|-Tyr-Trp, in which cleavage of the -Tyr-|-Leu- and -Tyr-|-Trp bonds also occurs).. In terms of biological role, cleaves peptides in various proteins in a process that requires ATP hydrolysis. Has a chymotrypsin-like activity. Plays a major role in the degradation of misfolded proteins. This chain is ATP-dependent Clp protease proteolytic subunit, found in Ruegeria pomeroyi (strain ATCC 700808 / DSM 15171 / DSS-3) (Silicibacter pomeroyi).